A 103-amino-acid polypeptide reads, in one-letter code: Heme-copper oxidase subunit 4 (103 aa).

A run of 3 helical transmembrane segments spans residues 20–40 (VWIVLVASAVAEVYLVLEGIA), 42–62 (NPFVFVLAVALFQSSLIALFF), and 75–95 (ITVSGAVLIAILIISAVTSVL).

Its subcellular location is the cell membrane. The polypeptide is Heme-copper oxidase subunit 4 (aoxC) (Aeropyrum pernix (strain ATCC 700893 / DSM 11879 / JCM 9820 / NBRC 100138 / K1)).